The sequence spans 231 residues: GrpE protein homolog, mitochondrial (231 aa).

A disordered region spans residues 49–71 (SEKAGEKAEEKAEEQNLSAEEQK).

The protein belongs to the GrpE family. Component of the PAM complex, at least composed of mtHsp70, MGE1, TIM44, PAM16, PAM17 and PAM18.

It is found in the mitochondrion matrix. Essential component of the PAM complex, a complex required for the translocation of transit peptide-containing proteins from the inner membrane into the mitochondrial matrix in an ATP-dependent manner. Seems to control the nucleotide-dependent binding of SSC1 to substrate proteins. In Candida glabrata (strain ATCC 2001 / BCRC 20586 / JCM 3761 / NBRC 0622 / NRRL Y-65 / CBS 138) (Yeast), this protein is GrpE protein homolog, mitochondrial (mge1).